The primary structure comprises 514 residues: Protein nucleotidyltransferase YdiU (514 aa).

8 residues coordinate ATP: Gly-90, Gly-92, Arg-93, Lys-113, Asp-125, Gly-126, Arg-176, and Arg-183. The active-site Proton acceptor is the Asp-267. 2 residues coordinate Mg(2+): Asn-268 and Asp-277. Asp-277 contributes to the ATP binding site.

This sequence belongs to the SELO family. Mg(2+) serves as cofactor. Mn(2+) is required as a cofactor.

The enzyme catalyses L-seryl-[protein] + ATP = 3-O-(5'-adenylyl)-L-seryl-[protein] + diphosphate. The catalysed reaction is L-threonyl-[protein] + ATP = 3-O-(5'-adenylyl)-L-threonyl-[protein] + diphosphate. It catalyses the reaction L-tyrosyl-[protein] + ATP = O-(5'-adenylyl)-L-tyrosyl-[protein] + diphosphate. It carries out the reaction L-histidyl-[protein] + UTP = N(tele)-(5'-uridylyl)-L-histidyl-[protein] + diphosphate. The enzyme catalyses L-seryl-[protein] + UTP = O-(5'-uridylyl)-L-seryl-[protein] + diphosphate. The catalysed reaction is L-tyrosyl-[protein] + UTP = O-(5'-uridylyl)-L-tyrosyl-[protein] + diphosphate. In terms of biological role, nucleotidyltransferase involved in the post-translational modification of proteins. It can catalyze the addition of adenosine monophosphate (AMP) or uridine monophosphate (UMP) to a protein, resulting in modifications known as AMPylation and UMPylation. This Photobacterium profundum (strain SS9) protein is Protein nucleotidyltransferase YdiU.